We begin with the raw amino-acid sequence, 737 residues long: Autolysin (737 aa).

Residues 1–13 (MKKESMSRIERRK) are compositionally biased toward basic and acidic residues. Disordered regions lie at residues 1 to 28 (MKKESMSRIERRKAQQRKKTPVQWKKST), 51 to 132 (AEAT…TDSS), and 335 to 360 (PSSGGNTGGGTVNPGTGGSNNQSGTN). Positions 1–53 (MKKESMSRIERRKAQQRKKTPVQWKKSTTLFSSALIVSSVGTPVALLPVTAEA) are cleaved as a signal peptide. Residues 67–117 (PTTETGLVETPTTETTPGTTEQPTTDSSTTTESTTESSKETPTTPSTEQPT) are compositionally biased toward low complexity. Residues 118-132 (ADSTTPVESGTTDSS) are compositionally biased toward polar residues. A compositionally biased stretch (gly residues) spans 339–352 (GNTGGGTVNPGTGG). One can recognise a LysM 1 domain in the interval 361–404 (TYYTVKSGDTLNKIAAQYGVSVANLRSWNGISGDLIFVGQKLIV). A disordered region spans residues 409–429 (SGNTGGSGSGGSNNNQSGTNT). Gly residues predominate over residues 410–419 (GNTGGSGSGG). A compositionally biased stretch (low complexity) spans 420–429 (SNNNQSGTNT). LysM domains are found at residues 429 to 472 (TYYT…KLIV), 497 to 540 (TYYT…KIIV), 565 to 608 (TYYT…KIIV), 631 to 674 (TSYT…TIIV), and 693 to 736 (KRHT…TLKV).

It belongs to the glycosyl hydrolase 73 family.

The protein localises to the secreted. Its function is as follows. Hydrolyzes the cell wall of E.faecalis and M.lysodeikticus. May play an important role in cell wall growth and cell separation. The chain is Autolysin from Enterococcus faecalis (strain ATCC 700802 / V583).